A 141-amino-acid polypeptide reads, in one-letter code: Nucleoside diphosphate kinase (141 aa).

Residues Lys-9, Phe-57, Arg-85, Thr-91, Arg-102, and Asn-112 each coordinate ATP. The active-site Pros-phosphohistidine intermediate is the His-115.

Belongs to the NDK family. In terms of assembly, homotetramer. Mg(2+) serves as cofactor.

The protein resides in the cytoplasm. The enzyme catalyses a 2'-deoxyribonucleoside 5'-diphosphate + ATP = a 2'-deoxyribonucleoside 5'-triphosphate + ADP. It catalyses the reaction a ribonucleoside 5'-diphosphate + ATP = a ribonucleoside 5'-triphosphate + ADP. In terms of biological role, major role in the synthesis of nucleoside triphosphates other than ATP. The ATP gamma phosphate is transferred to the NDP beta phosphate via a ping-pong mechanism, using a phosphorylated active-site intermediate. The chain is Nucleoside diphosphate kinase from Chlamydia felis (strain Fe/C-56) (Chlamydophila felis).